The following is a 393-amino-acid chain: MTNSNRIKLTWISFLSYALTGALVIVTGMVMGNIADYFQLPVSSMSNTFTFLNAGILISIFLNAWLMEIIPLKTQLRFGFILMVLAVAGLMFSHSLALFSAAMFVLGLVSGITMSIGTFLITQLYEGRQRGSRLLFTDSFFSMAGMIFPMVAAFLLARSIEWYWVYACIGLVYLAIFILTFGCEFPALGKHAQHSQAPVAKEKWGIGVLFLAVAALCYILGQLGFISWVPEYAKGLGMSLNDAGALVSDFWMSYMFGMWAFSFILRFFDLQRILTVLAGIAAVLMYLFITGTQAHMPWFILTLGFFSSAIYTSIITLGSQQTKVASPKLVNFILTCGTIGTMLTFVVTGPIVAHSGPQAALLTANGLYAVVFVMCFALGFVSRHRQHSSPAAH.

12 helical membrane passes run 11–31, 51–71, 78–98, 101–121, 134–154, 162–182, 206–226, 245–265, 273–293, 298–318, 332–352, and 361–381; these read WISFLSYALTGALVIVTGMVM, FLNAGILISIFLNAWLMEIIP, FGFILMVLAVAGLMFSHSLAL, AAMFVLGLVSGITMSIGTFLI, LLFTDSFFSMAGMIFPMVAAF, WYWVYACIGLVYLAIFILTFG, IGVLFLAVAALCYILGQLGFI, ALVSDFWMSYMFGMWAFSFIL, ILTVLAGIAAVLMYLFITGTQ, WFILTLGFFSSAIYTSIITLG, FILTCGTIGTMLTFVVTGPIV, and LLTANGLYAVVFVMCFALGFV.

This sequence belongs to the major facilitator superfamily. TsgA family.

Its subcellular location is the cell inner membrane. In Salmonella schwarzengrund (strain CVM19633), this protein is Protein TsgA.